The primary structure comprises 458 residues: Protein amnionless (458 aa).

Positions 1-19 (MGALGRVLLWLQLCAMTRA) are cleaved as a signal peptide. Topologically, residues 20–362 (AYKLWVPNTS…ELNQSSSGAG (343 aa)) are extracellular. Asn-27 is a glycosylation site (N-linked (GlcNAc...) asparagine). Cystine bridges form between Cys-43–Cys-96, Cys-137–Cys-213, Cys-205–Cys-211, Cys-223–Cys-249, Cys-234–Cys-250, and Cys-239–Cys-253. An interaction with CUBN region spans residues 67-87 (SDMLLPLDGELVLASGAALSA). The VWFC domain maps to 203–254 (QACTDASGCVCGNAEMLPWICASLLQPLGGRCPQAACQDPLLPQGQCCDLCG). Asn-355 carries an N-linked (GlcNAc...) asparagine glycan. A helical transmembrane segment spans residues 363–383 (LAGGVAALVLLALLGTVLLLL). Residues 384–458 (HRSGRLRWRR…LFAGEAEAEA (75 aa)) are Cytoplasmic-facing.

In terms of assembly, interacts (via extracellular region) with CUBN/cubilin. This gives rise to a huge complex containing one AMN chain and three CUBN chains. In terms of processing, N-glycosylated. A soluble form arises by proteolytic removal of the membrane anchor. In terms of tissue distribution, expressed in polarized epithelial cells which are specialized in resorption or transport, specifically kidney proximal tubules and intestinal epithelium.

The protein resides in the apical cell membrane. The protein localises to the cell membrane. It localises to the endosome membrane. It is found in the membrane. Its subcellular location is the coated pit. In terms of biological role, membrane-bound component of the endocytic receptor formed by AMN and CUBN. Required for normal CUBN glycosylation and trafficking to the cell surface. The complex formed by AMN and CUBN is required for efficient absorption of vitamin B12. Required for normal CUBN-mediated protein transport in the kidney. This is Protein amnionless (Amn) from Mus musculus (Mouse).